We begin with the raw amino-acid sequence, 133 residues long: Small ribosomal subunit protein uS9 (133 aa).

A compositionally biased stretch (basic and acidic residues) spans 97 to 113 (SKQELKSHGFLTRDPRK). The disordered stretch occupies residues 97–133 (SKQELKSHGFLTRDPRKKERKKYGHKKARKSFQFSKR). Residues 114–133 (KERKKYGHKKARKSFQFSKR) show a composition bias toward basic residues.

The protein belongs to the universal ribosomal protein uS9 family.

This Chlamydia abortus (strain DSM 27085 / S26/3) (Chlamydophila abortus) protein is Small ribosomal subunit protein uS9.